Consider the following 280-residue polypeptide: MLSKAHAKVNLSLDVIGKRKDGYHLLKMLMQTIDLYDLIEIKKIKKGIIIDCDREYIPKDRRNLAYKAAELFLDRYNIDSGVRIDITKNIPVAAGLAGGSTDAATVLKIMRDIFRPDISNEELKEIALDIGADVPFCIEGGTALCEGIGEKITPIKNFKNQILVLVKPNFGLSTKDVYNNLKVEKIYIHPNTTKLIQSIEEDNLKSVARNMRNVLENVTLRKYKALNSIKSNFIELGALGSMMSGSGPSVFGLFDDMLKAQICYDNMKEKYKEVFITRTI.

The active site involves Lys-8. Position 91–101 (91–101) interacts with ATP; it reads PVAAGLAGGST. The active site involves Asp-133.

It belongs to the GHMP kinase family. IspE subfamily.

The enzyme catalyses 4-CDP-2-C-methyl-D-erythritol + ATP = 4-CDP-2-C-methyl-D-erythritol 2-phosphate + ADP + H(+). It participates in isoprenoid biosynthesis; isopentenyl diphosphate biosynthesis via DXP pathway; isopentenyl diphosphate from 1-deoxy-D-xylulose 5-phosphate: step 3/6. Its function is as follows. Catalyzes the phosphorylation of the position 2 hydroxy group of 4-diphosphocytidyl-2C-methyl-D-erythritol. This is 4-diphosphocytidyl-2-C-methyl-D-erythritol kinase from Clostridium botulinum (strain 657 / Type Ba4).